The following is a 229-amino-acid chain: Prolactin (229 aa).

Positions 1 to 30 are cleaved as a signal peptide; it reads MDKKRSSLKGSLLLLLLLVSDLLLCKSVAS. Cys34 and Cys41 are disulfide-bonded. Residue Ser56 is modified to Phosphoserine. Residue Asn61 is glycosylated (N-linked (GlcNAc...) asparagine; partial). Phosphoserine is present on residues Ser64 and Ser120. 2 cysteine pairs are disulfide-bonded: Cys88–Cys204 and Cys221–Cys229.

Belongs to the somatotropin/prolactin family. As to quaternary structure, interacts with PRLR.

The protein localises to the secreted. Prolactin acts primarily on the mammary gland by promoting lactation. The sequence is that of Prolactin (PRL) from Equus caballus (Horse).